A 596-amino-acid polypeptide reads, in one-letter code: Arrestin domain-containing protein C31A2.12 (596 aa).

The chain crosses the membrane as a helical span at residues 194-211 (AYAIGSYIPIHFVLVPLL). 2 disordered regions span residues 363 to 387 (NLDT…TYAS) and 405 to 446 (QQQP…VITR). 2 positions are modified to phosphothreonine: threonine 373 and threonine 374. Polar residues-rich tracts occupy residues 405-420 (QQQP…SPSN) and 430-446 (SLGS…VITR). 4 positions are modified to phosphoserine: serine 452, serine 474, serine 493, and serine 497. Residues 493-596 (SRPPSPGIVT…MLPSGFSRRN (104 aa)) form a disordered region. Phosphothreonine occurs at positions 502 and 507. Over residues 504-522 (PQRTSPSFFVSPTESTRQS) the composition is skewed to polar residues. Serine 514 carries the post-translational modification Phosphoserine. Low complexity predominate over residues 531–555 (HSTSSSSGISPSHSSASLAHLSQAS).

Belongs to the arrestin family.

It localises to the membrane. This Schizosaccharomyces pombe (strain 972 / ATCC 24843) (Fission yeast) protein is Arrestin domain-containing protein C31A2.12.